Consider the following 268-residue polypeptide: Tryptophan synthase alpha chain (268 aa).

Active-site proton acceptor residues include Glu49 and Asp60.

The protein belongs to the TrpA family. As to quaternary structure, tetramer of two alpha and two beta chains.

It catalyses the reaction (1S,2R)-1-C-(indol-3-yl)glycerol 3-phosphate + L-serine = D-glyceraldehyde 3-phosphate + L-tryptophan + H2O. Its pathway is amino-acid biosynthesis; L-tryptophan biosynthesis; L-tryptophan from chorismate: step 5/5. Functionally, the alpha subunit is responsible for the aldol cleavage of indoleglycerol phosphate to indole and glyceraldehyde 3-phosphate. The polypeptide is Tryptophan synthase alpha chain (Mannheimia succiniciproducens (strain KCTC 0769BP / MBEL55E)).